The chain runs to 254 residues: Germin-like protein 4-1 (254 aa).

The N-terminal stretch at 1 to 27 is a signal peptide; the sequence is MASRAFAAVFAAVALVVCSSVLPRALA. The cysteines at positions 37 and 52 are disulfide-linked. A Cupin type-1 domain is found at 67–220; the sequence is KALGVPGNTV…AFMIDKDQVD (154 aa). Positions 115, 117, 122, and 166 each coordinate Mn(2+).

Belongs to the germin family. As to quaternary structure, oligomer (believed to be a pentamer but probably hexamer).

The protein resides in the secreted. It localises to the extracellular space. Its subcellular location is the apoplast. Functionally, may play a role in plant defense. Probably has no oxalate oxidase activity even if the active site is conserved. The chain is Germin-like protein 4-1 from Oryza sativa subsp. japonica (Rice).